A 280-amino-acid chain; its full sequence is Alpha-aminoadipate--LysW ligase LysX (280 aa).

ATP contacts are provided by residues Lys89, Lys129, 133–139 (GSWGRLL), 169–180 (QEYVEKPGRDIR), Arg194, and Asn202. Residues 93–276 (SVALAKAGLP…IPGEILKYAW (184 aa)) form the ATP-grasp domain. Residues Asp237, Glu249, and Asn251 each coordinate Mg(2+). Positions 258–259 (NS) match the N-[TS] motif that is essential for LysX substrate specificity motif.

The protein belongs to the RimK family. LysX subfamily. As to quaternary structure, homodimer. Mg(2+) serves as cofactor.

It catalyses the reaction [amino-group carrier protein]-C-terminal-L-glutamate + L-2-aminoadipate + ATP = [amino-group carrier protein]-C-terminal-N-(1,4-dicarboxybutan-1-yl)-L-glutamine + ADP + phosphate + H(+). It participates in amino-acid biosynthesis; L-lysine biosynthesis via AAA pathway; L-lysine from L-alpha-aminoadipate (Thermus route): step 1/5. Its function is as follows. Catalyzes the ATP-dependent formation of a covalent bond between the amino group of alpha-aminoadipate (AAA) and the gamma-carboxyl group of the C-terminal glutamate residue in LysW. The protein is Alpha-aminoadipate--LysW ligase LysX (lysX) of Thermus thermophilus (strain ATCC 27634 / DSM 579 / HB8).